Here is a 365-residue protein sequence, read N- to C-terminus: Cobalt-precorrin-5B C(1)-methyltransferase (365 aa).

This sequence belongs to the CbiD family.

The enzyme catalyses Co-precorrin-5B + S-adenosyl-L-methionine = Co-precorrin-6A + S-adenosyl-L-homocysteine. It functions in the pathway cofactor biosynthesis; adenosylcobalamin biosynthesis; cob(II)yrinate a,c-diamide from sirohydrochlorin (anaerobic route): step 6/10. Catalyzes the methylation of C-1 in cobalt-precorrin-5B to form cobalt-precorrin-6A. The protein is Cobalt-precorrin-5B C(1)-methyltransferase of Moorella thermoacetica (strain ATCC 39073 / JCM 9320).